The primary structure comprises 443 residues: MRSVSYVQRVALDFSGSLFPHAICLGDVDNDALNELVVGDTSGKLSVYKNDDSRPWLTCMCQGMLTCVGVGDVCNKGKNLVVAVSAEGWLHLFDLTPTKALDASGHHETLGEEQRPVFKQHIPANTKVMLISDIDGDGCYELVVGYTDRVVRAFRWEELAEGPEHLAGQLVSLKKWMLEGQVDSLSVTPGPLGVPELVVSQPGCAYAVLLCTWNKDTGSPPASEEATGDSRETPAARDVVLHQTSGRIHNKNVSTHLIGNIRQGHNPEGGNAGLFALCTLDGTLKLMQEADKLLWSVQVDHQLFALEKLDVTGNGLEEVVACAWDGQTYIIDHNRTVVRFQVDENIRAFCAGQYACKEGRNSPCLVYVTFNQKIYVYWEVQLERMESTNLLKLLEAEPEYHRLLQELRVDPEDLPAVCTLLHQTLYHPDQPLQCTPSSFQDPT.

The FG-GAP 1; atypical repeat unit spans residues 19–48; sequence FPHAICLGDVDNDALNELVVGDTSGKLSVY. The residue at position 104 (S104) is a Phosphoserine. One copy of the FG-GAP 2; atypical repeat lies at 125–154; it reads NTKVMLISDIDGDGCYELVVGYTDRVVRAF. S219 carries the phosphoserine modification.

Part of the KICSTOR complex composed of KPTN, ITFG2, KICS2 and SZT2. SZT2 probably serves as a link between the other three proteins in the KICSTOR complex and may mediate the direct interaction with the GATOR complex via GATOR1. The KICSTOR complex interacts directly with the GATOR1 complex and most probably indirectly with the GATOR2 complex in an amino acid-independent manner.

The protein resides in the lysosome membrane. As part of the KICSTOR complex functions in the amino acid-sensing branch of the TORC1 signaling pathway. Recruits, in an amino acid-independent manner, the GATOR1 complex to the lysosomal membranes and allows its interaction with GATOR2 and the RAG GTPases. Functions upstream of the RAG GTPases and is required to negatively regulate mTORC1 signaling in absence of amino acids. In absence of the KICSTOR complex mTORC1 is constitutively localized to the lysosome and activated. The KICSTOR complex is also probably involved in the regulation of mTORC1 by glucose. This Mus musculus (Mouse) protein is KICSTOR complex protein ITFG2.